The primary structure comprises 168 residues: Peptidoglycan-associated lipoprotein (168 aa).

A signal peptide spans 1 to 21 (MEMLKFGKFAALALAMAVAVG). The N-palmitoyl cysteine moiety is linked to residue C22. C22 carries S-diacylglycerol cysteine lipidation. An OmpA-like domain is found at 56 to 168 (SDEAALRAIT…AQNRRVELKK (113 aa)). Residues 147 to 168 (RPVATGHDEQSWAQNRRVELKK) are disordered.

Belongs to the Pal lipoprotein family. As to quaternary structure, the Tol-Pal system is composed of five core proteins: the inner membrane proteins TolA, TolQ and TolR, the periplasmic protein TolB and the outer membrane protein Pal. They form a network linking the inner and outer membranes and the peptidoglycan layer.

The protein localises to the cell outer membrane. Functionally, part of the Tol-Pal system, which plays a role in outer membrane invagination during cell division and is important for maintaining outer membrane integrity. The protein is Peptidoglycan-associated lipoprotein of Pseudomonas aeruginosa (strain ATCC 15692 / DSM 22644 / CIP 104116 / JCM 14847 / LMG 12228 / 1C / PRS 101 / PAO1).